Reading from the N-terminus, the 218-residue chain is Ras-related protein YPT3 (218 aa).

Residue 20-27 (GDSGVGKS) participates in GTP binding. The Effector region signature appears at 42–50 (SKSTIGVEF). GTP-binding positions include 68 to 72 (DTAGQ) and 126 to 129 (NKSD). The segment at 186–205 (GDEGATSSAPPKGETINIKD) is disordered. 2 S-geranylgeranyl cysteine lipidation sites follow: Cys215 and Cys216.

The protein belongs to the small GTPase superfamily. Rab family. As to expression, its expression is weak in leaves, higher in stems and roots, but highest in petals, stigma and stamens.

The protein localises to the cell membrane. Functionally, protein transport. Probably involved in vesicular traffic. This Nicotiana plumbaginifolia (Leadwort-leaved tobacco) protein is Ras-related protein YPT3 (YPT3).